We begin with the raw amino-acid sequence, 191 residues long: MEYFDMRKMSVNLWRNAAGETREICTFPPAKRDFYWRASIASIAANGEFSLFPGMERIVTLLEGGEMLLESADRFNHTLKPLQPFAFTADQVVKAKLTAGQMSMDFNIMTRLDVCKAKVRIAERTFTTFGSRGGVVFVINGAWQLGDKLLTTDQGVCWFDGRHTLRLLQPQGKLLFSEINWLAGHSPDQVQ.

This sequence belongs to the Ves family.

This Shigella flexneri protein is Protein Ves.